A 279-amino-acid polypeptide reads, in one-letter code: MAIEKKFVQEGFKKAMVDEYFLEKLERAGYGGMEINRTPMGTQITLKAEKPGMIIGKAGKSIRRYTKEMDMRFKMDNPQIDVQEVKKPELNAQMMATRLANALERGWYFRKAGQSTLQRIMDSGAMGCEVIIAGKLTGARKRREKFIAGYIKHCGKPVEELVDVGYARAKKKLGIIGVKVRIMPPEAVLPDQITIEAAQAAAPAPAEKKSPAAGAEPAKEAAAVPAPAESTAAEVEKIIAESEAAEAVTPEGAEGDEKAAAAKKQPKKKVVKTDGDSQS.

One can recognise a KH type-2 domain in the interval 17 to 86 (VDEYFLEKLE…NPQIDVQEVK (70 aa)). Low complexity-rich tracts occupy residues 206–233 (AEKK…STAA) and 241–252 (ESEAAEAVTPEG). Residues 206–279 (AEKKSPAAGA…VVKTDGDSQS (74 aa)) are disordered.

Belongs to the universal ribosomal protein uS3 family. As to quaternary structure, part of the 30S ribosomal subunit.

In terms of biological role, binds the lower part of the 30S subunit head. The polypeptide is Small ribosomal subunit protein uS3 (Methanocella arvoryzae (strain DSM 22066 / NBRC 105507 / MRE50)).